The chain runs to 498 residues: Glycerol kinase (498 aa).

Threonine 11 is an ADP binding site. ATP-binding residues include threonine 11, threonine 12, and serine 13. Sn-glycerol 3-phosphate is bound at residue threonine 11. An ADP-binding site is contributed by arginine 15. Residues arginine 81, glutamate 82, tyrosine 133, and aspartate 242 each contribute to the sn-glycerol 3-phosphate site. Residues arginine 81, glutamate 82, tyrosine 133, aspartate 242, and glutamine 243 each contribute to the glycerol site. The ADP site is built by threonine 264 and glycine 307. ATP contacts are provided by threonine 264, glycine 307, glutamine 311, and glycine 411. Glycine 411 lines the ADP pocket.

The protein belongs to the FGGY kinase family.

The enzyme catalyses glycerol + ATP = sn-glycerol 3-phosphate + ADP + H(+). Its pathway is polyol metabolism; glycerol degradation via glycerol kinase pathway; sn-glycerol 3-phosphate from glycerol: step 1/1. Inhibited by fructose 1,6-bisphosphate (FBP). Its function is as follows. Key enzyme in the regulation of glycerol uptake and metabolism. Catalyzes the phosphorylation of glycerol to yield sn-glycerol 3-phosphate. This Afipia carboxidovorans (strain ATCC 49405 / DSM 1227 / KCTC 32145 / OM5) (Oligotropha carboxidovorans) protein is Glycerol kinase.